Consider the following 122-residue polypeptide: Large ribosomal subunit protein uL14 (122 aa).

It belongs to the universal ribosomal protein uL14 family. Part of the 50S ribosomal subunit. Forms a cluster with proteins L3 and L19. In the 70S ribosome, L14 and L19 interact and together make contacts with the 16S rRNA in bridges B5 and B8.

In terms of biological role, binds to 23S rRNA. Forms part of two intersubunit bridges in the 70S ribosome. This is Large ribosomal subunit protein uL14 from Cytophaga hutchinsonii (strain ATCC 33406 / DSM 1761 / CIP 103989 / NBRC 15051 / NCIMB 9469 / D465).